The sequence spans 321 residues: XylDLEGF operon transcriptional activator 1 (321 aa).

The HTH araC/xylS-type domain occupies Glu-214–Gln-315. 2 consecutive DNA-binding regions (H-T-H motif) follow at residues Glu-231–Ala-252 and Ile-282–Phe-305.

The protein localises to the cytoplasm. In terms of biological role, regulatory protein of the TOL plasmid xyl operons. XylS activates the xylXYZLTEGFJQKIH operon required for the degradation of toluene, m-xylene and p-xylene. In Pseudomonas putida (Arthrobacter siderocapsulatus), this protein is XylDLEGF operon transcriptional activator 1 (xylS1).